The following is a 355-amino-acid chain: Probable L-aspartate decarboxylase (355 aa).

At K210 the chain carries N6-(pyridoxal phosphate)lysine.

This sequence belongs to the group II decarboxylase family. MfnA subfamily. Requires pyridoxal 5'-phosphate as cofactor.

It carries out the reaction L-aspartate + H(+) = beta-alanine + CO2. The protein operates within cofactor biosynthesis; coenzyme A biosynthesis. Functionally, catalyzes the decarboxylation of L-aspartate to produce beta-alanine. This Halobacterium salinarum (strain ATCC 29341 / DSM 671 / R1) protein is Probable L-aspartate decarboxylase.